A 242-amino-acid chain; its full sequence is Neuromodulin (242 aa).

Residues 1–242 (MLCCMRRTKQ…EEREADQEHA (242 aa)) form a disordered region. S-palmitoyl cysteine attachment occurs at residues Cys-3 and Cys-4. The span at 9–32 (KQVEKNDEDQKIEQDGIKPEDKAH) shows a compositional bias: basic and acidic residues. The IQ domain occupies 31-60 (AHKAATKIQASFRGHITRKKLKGEKKGDAQ). Ser-41 is modified (phosphoserine; by PHK and PKC). 2 stretches are compositionally biased toward basic and acidic residues: residues 66–84 (GNEK…KEGE) and 98–117 (KAEE…KGEG). Over residues 142–157 (ETESATKASTDNSPSS) the composition is skewed to polar residues. Ser-154, Ser-156, and Ser-157 each carry phosphoserine. Over residues 158 to 170 (KAEDAPAKEEPKQ) the composition is skewed to basic and acidic residues. Low complexity predominate over residues 171 to 203 (ADVPAAVTAAAAATTPAAEDAAAKATAQPPTDA). The residue at position 185 (Thr-185) is a Phosphothreonine. A phosphoserine; by CK2 mark is found at Ser-206 and Ser-207. The segment covering 209-242 (AEEKIEAVDETKPKESARQDEGKGEEREADQEHA) has biased composition (basic and acidic residues).

The protein belongs to the neuromodulin family. As to quaternary structure, identified in a complex containing FGFR4, NCAM1, CDH2, PLCG1, FRS2, SRC, SHC1, GAP43 and CTTN. Interacts (via IQ domain) with calmodulin. Binds calmodulin with a greater affinity in the absence of Ca(2+) than in its presence. Post-translationally, phosphorylated. Phosphorylation of this protein by a protein kinase C is specifically correlated with certain forms of synaptic plasticity. Palmitoylated by ZDHHC3. Palmitoylation is regulated by ARF6 and is essential for plasma membrane association and axonal and dendritic filopodia induction. Deacylated by LYPLA2.

The protein resides in the cell membrane. Its subcellular location is the cell projection. It localises to the growth cone membrane. The protein localises to the synapse. It is found in the filopodium membrane. The protein resides in the perikaryon. Its subcellular location is the dendrite. It localises to the axon. The protein localises to the cytoplasm. In terms of biological role, this protein is associated with nerve growth. It is a major component of the motile 'growth cones' that form the tips of elongating axons. Plays a role in axonal and dendritic filopodia induction. This is Neuromodulin (GAP43) from Felis catus (Cat).